The sequence spans 468 residues: MTKTLPKDFIFGGATAAYQAEGATHTDGKGPVAWDKYLEDNYWYTAEPASDFYNRYPVDLKLSEEFGVNGIRISIAWSRIFPTGKGEVNPKGVEYYHNLFAECHKRHVEPFVTLHHFDTPEALHSDGDFLNRENIEHFVNYAEFCFKEFSEVNYWTTFNEIGPIGDGQYLVGKFPPGIQYDLAKVFQSHHNMMVSHARAVKLFKDSGYSGEIGVVHALPTKYPFDANNPDDVRAAELEDIIHNKFILDATYLGKYSDKTMEGVNHILEVNGGELDLREEDFVALDAAKDLNDFLGINYYMSDWMQAFDGETEIIHNGKGEKGSSKYQIKGVGRRKAPVDAPKTDWDWIIFPQGLYDQIMRVKADYPNYKKIYITENGLGYKDEFVDKTVYDDGRIDYVKKHLEVISDAISDGANVKGYFMWSLMDVFSWSNGYEKRYGLFYVDFETQERYPKKSAYWYKKVAETQVIE.

5 residues coordinate D-galactose 6-phosphate: Q19, H116, N159, E160, and N297. E160 acts as the Proton donor in catalysis. The active-site Nucleophile is the E375. D-galactose 6-phosphate-binding residues include S428, W429, K435, and Y437.

This sequence belongs to the glycosyl hydrolase 1 family.

It catalyses the reaction a 6-phospho-beta-D-galactoside + H2O = D-galactose 6-phosphate + an alcohol. It participates in carbohydrate metabolism; lactose degradation; D-galactose 6-phosphate and beta-D-glucose from lactose 6-phosphate: step 1/1. The sequence is that of 6-phospho-beta-galactosidase from Streptococcus pyogenes serotype M5 (strain Manfredo).